Reading from the N-terminus, the 386-residue chain is NifS-like protein (386 aa).

Residues 58-59 (SE) and 184-186 (SIN) contribute to the pyridoxal 5'-phosphate site.

It belongs to the class-V pyridoxal-phosphate-dependent aminotransferase family. NifS/IscS subfamily. The cofactor is pyridoxal 5'-phosphate.

It localises to the virion. In Ornithodoros (relapsing fever ticks), this protein is NifS-like protein.